Reading from the N-terminus, the 550-residue chain is Hydroxylamine reductase (550 aa).

Cys3, Cys6, Cys18, and Cys25 together coordinate [2Fe-2S] cluster. The hybrid [4Fe-2O-2S] cluster site is built by His249, Glu273, Cys317, Cys405, Cys433, Cys458, Glu492, and Lys494. A Cysteine persulfide modification is found at Cys405.

The protein belongs to the HCP family. [2Fe-2S] cluster serves as cofactor. The cofactor is hybrid [4Fe-2O-2S] cluster.

It is found in the cytoplasm. It catalyses the reaction A + NH4(+) + H2O = hydroxylamine + AH2 + H(+). Catalyzes the reduction of hydroxylamine to form NH(3) and H(2)O. This is Hydroxylamine reductase from Escherichia coli O7:K1 (strain IAI39 / ExPEC).